The primary structure comprises 335 residues: Tetraacyldisaccharide 4'-kinase (335 aa).

An ATP-binding site is contributed by 59–66; that stretch reads TAGGNGKT.

It belongs to the LpxK family.

The catalysed reaction is a lipid A disaccharide + ATP = a lipid IVA + ADP + H(+). It participates in glycolipid biosynthesis; lipid IV(A) biosynthesis; lipid IV(A) from (3R)-3-hydroxytetradecanoyl-[acyl-carrier-protein] and UDP-N-acetyl-alpha-D-glucosamine: step 6/6. Its function is as follows. Transfers the gamma-phosphate of ATP to the 4'-position of a tetraacyldisaccharide 1-phosphate intermediate (termed DS-1-P) to form tetraacyldisaccharide 1,4'-bis-phosphate (lipid IVA). The chain is Tetraacyldisaccharide 4'-kinase from Vibrio cholerae serotype O1 (strain ATCC 39541 / Classical Ogawa 395 / O395).